The sequence spans 443 residues: Protein PRRC1 (443 aa).

Residues 1 to 165 (MMEESGIETT…FSAPPVTGIL (165 aa)) are disordered. A compositionally biased stretch (polar residues) spans 29-45 (EAHSAATSSFSSPNVSG). The span at 59–72 (PSLPPVQPSAPPPF) shows a compositional bias: pro residues. Composition is skewed to low complexity over residues 81–96 (VPLS…SPSP) and 109–134 (PPAT…FSVG). Ser-406 carries the post-translational modification Phosphoserine.

Belongs to the PRRC1 family. In terms of assembly, interacts with PRKAR1A; resulting in PKA activation.

It localises to the golgi apparatus. The protein resides in the cytoplasm. Functionally, may act as a regulator of the protein kinase A (PKA) during embryonic development. The sequence is that of Protein PRRC1 (Prrc1) from Mus musculus (Mouse).